The following is a 310-amino-acid chain: Carbamate kinase 1 (310 aa).

Belongs to the carbamate kinase family.

It localises to the cytoplasm. The catalysed reaction is hydrogencarbonate + NH4(+) + ATP = carbamoyl phosphate + ADP + H2O + H(+). It functions in the pathway metabolic intermediate metabolism; carbamoyl phosphate degradation; CO(2) and NH(3) from carbamoyl phosphate: step 1/1. The chain is Carbamate kinase 1 (arcC1) from Staphylococcus epidermidis (strain ATCC 12228 / FDA PCI 1200).